The primary structure comprises 329 residues: Cuticle collagen 6 (329 aa).

Triple-helical region stretches follow at residues glycine 142–aspartate 171, glycine 189–proline 212, glycine 216–leucine 248, glycine 253–serine 279, and glycine 282–cysteine 320. Residues proline 146–tyrosine 329 are disordered. The span at aspartate 156 to glutamate 173 shows a compositional bias: basic and acidic residues. Residues proline 187 to proline 199 are compositionally biased toward low complexity. Residues lysine 200 to proline 212 show a composition bias toward pro residues. Positions valine 251–asparagine 272 are enriched in pro residues. Positions proline 273–glycine 282 are enriched in low complexity. Over residues cysteine 320–tyrosine 329 the composition is skewed to pro residues.

It belongs to the cuticular collagen family. As to quaternary structure, collagen polypeptide chains are complexed within the cuticle by disulfide bonds and other types of covalent cross-links.

Functionally, nematode cuticles are composed largely of collagen-like proteins. The cuticle functions both as an exoskeleton and as a barrier to protect the worm from its environment. This is Cuticle collagen 6 from Caenorhabditis elegans.